A 383-amino-acid chain; its full sequence is Probable cell wall hydrolase LytN (383 aa).

The N-terminal stretch at 1–49 is a signal peptide; the sequence is MFVYYCKECFIMNKQQSKVRYSIRKVSIGILSISIGMFLALGMSNKAYA. Positions 175 to 219 constitute a LysM domain; the sequence is QIYTVKKGDTLSAIALKYKTTVSNIQNTNNIANPNLIFIGQKLKV. One can recognise a Peptidase C51 domain in the interval 241–378; that stretch reads NSSTLNYLKT…NYENDMIFIR (138 aa).

Its subcellular location is the secreted. In terms of biological role, probably involved in peptidoglycan hydrolysis. The protein is Probable cell wall hydrolase LytN (lytN) of Staphylococcus aureus (strain NCTC 8325 / PS 47).